Here is a 234-residue protein sequence, read N- to C-terminus: Purine nucleoside phosphorylase DeoD-type (234 aa).

H5 provides a ligand contact to a purine D-ribonucleoside. Phosphate contacts are provided by residues G21, R25, R44, and 88–91 (RVGT). Residues 178–180 (EME) and 202–203 (SD) contribute to the a purine D-ribonucleoside site. Catalysis depends on D203, which acts as the Proton donor.

The protein belongs to the PNP/UDP phosphorylase family. Homohexamer; trimer of homodimers.

The catalysed reaction is a purine D-ribonucleoside + phosphate = a purine nucleobase + alpha-D-ribose 1-phosphate. It catalyses the reaction a purine 2'-deoxy-D-ribonucleoside + phosphate = a purine nucleobase + 2-deoxy-alpha-D-ribose 1-phosphate. Catalyzes the reversible phosphorolytic breakdown of the N-glycosidic bond in the beta-(deoxy)ribonucleoside molecules, with the formation of the corresponding free purine bases and pentose-1-phosphate. The protein is Purine nucleoside phosphorylase DeoD-type of Lactococcus lactis subsp. lactis (strain IL1403) (Streptococcus lactis).